A 210-amino-acid chain; its full sequence is Outer-membrane lipoprotein carrier protein (210 aa).

A signal peptide spans 1–26 (MHMIRRAAGALAVFAVAALAAAPAWA).

The protein belongs to the LolA family. As to quaternary structure, monomer.

The protein resides in the periplasm. In terms of biological role, participates in the translocation of lipoproteins from the inner membrane to the outer membrane. Only forms a complex with a lipoprotein if the residue after the N-terminal Cys is not an aspartate (The Asp acts as a targeting signal to indicate that the lipoprotein should stay in the inner membrane). This Bordetella bronchiseptica (strain ATCC BAA-588 / NCTC 13252 / RB50) (Alcaligenes bronchisepticus) protein is Outer-membrane lipoprotein carrier protein.